We begin with the raw amino-acid sequence, 173 residues long: Crossover junction endodeoxyribonuclease RuvC (173 aa).

Catalysis depends on residues Asp-8, Glu-67, and Asp-139. Mg(2+)-binding residues include Asp-8, Glu-67, and Asp-139.

This sequence belongs to the RuvC family. As to quaternary structure, homodimer which binds Holliday junction (HJ) DNA. The HJ becomes 2-fold symmetrical on binding to RuvC with unstacked arms; it has a different conformation from HJ DNA in complex with RuvA. In the full resolvosome a probable DNA-RuvA(4)-RuvB(12)-RuvC(2) complex forms which resolves the HJ. Requires Mg(2+) as cofactor.

The protein resides in the cytoplasm. The enzyme catalyses Endonucleolytic cleavage at a junction such as a reciprocal single-stranded crossover between two homologous DNA duplexes (Holliday junction).. The RuvA-RuvB-RuvC complex processes Holliday junction (HJ) DNA during genetic recombination and DNA repair. Endonuclease that resolves HJ intermediates. Cleaves cruciform DNA by making single-stranded nicks across the HJ at symmetrical positions within the homologous arms, yielding a 5'-phosphate and a 3'-hydroxyl group; requires a central core of homology in the junction. The consensus cleavage sequence is 5'-(A/T)TT(C/G)-3'. Cleavage occurs on the 3'-side of the TT dinucleotide at the point of strand exchange. HJ branch migration catalyzed by RuvA-RuvB allows RuvC to scan DNA until it finds its consensus sequence, where it cleaves and resolves the cruciform DNA. The polypeptide is Crossover junction endodeoxyribonuclease RuvC (Shewanella pealeana (strain ATCC 700345 / ANG-SQ1)).